The primary structure comprises 2075 residues: Autophagy-related protein 2 homolog B (2075 aa).

Residues 13–107 (ACRYLLQRYL…LEMVFRPRPR (95 aa)) form the Chorein N-terminal domain. S255, S379, S496, S839, S885, S898, and S1007 each carry phosphoserine. Y1011 carries the post-translational modification Phosphotyrosine. Phosphoserine is present on residues S1015 and S1017. T1021 carries the phosphothreonine modification. The segment at 1373-1403 (KAEMKPGVPQRKPKVDSSARSSSHGPVLPEA) is disordered. S1525 is modified (phosphoserine). Disordered regions lie at residues 1570–1593 (TSPA…GRHT), 1759–1792 (EPNL…EDVS), and 2055–2075 (RNQI…HGED). Polar residues predominate over residues 1578–1587 (PHSSPSQTPT). Positions 2058–2075 (IRPDVRQDESQKWRHGED) are enriched in basic and acidic residues.

It belongs to the ATG2 family. As to quaternary structure, interacts with WDR45/WIPI4.

Its subcellular location is the preautophagosomal structure membrane. The protein localises to the lipid droplet. It is found in the endoplasmic reticulum membrane. It carries out the reaction a 1,2-diacyl-sn-glycero-3-phospho-L-serine(in) = a 1,2-diacyl-sn-glycero-3-phospho-L-serine(out). It catalyses the reaction a 1,2-diacyl-sn-glycero-3-phosphoethanolamine(in) = a 1,2-diacyl-sn-glycero-3-phosphoethanolamine(out). Its function is as follows. Lipid transfer protein required for both autophagosome formation and regulation of lipid droplet morphology and dispersion. Tethers the edge of the isolation membrane (IM) to the endoplasmic reticulum (ER) and mediates direct lipid transfer from ER to IM for IM expansion. Binds to the ER exit site (ERES), which is the membrane source for autophagosome formation, and extracts phospholipids from the membrane source and transfers them to ATG9 (ATG9A or ATG9B) to the IM for membrane expansion. Lipid transfer activity is enhanced by WDR45/WIPI4, which promotes ATG2B-association with phosphatidylinositol 3-monophosphate (PI3P)-containing membranes. The polypeptide is Autophagy-related protein 2 homolog B (Mus musculus (Mouse)).